A 493-amino-acid chain; its full sequence is High affinity nitrate transporter 2.7 (493 aa).

Residues 1-19 show a composition bias toward polar residues; sequence MEPSQRNTKPPSFSDSTIP. A disordered region spans residues 1-20; that stretch reads MEPSQRNTKPPSFSDSTIPV. Helical transmembrane passes span 46 to 66, 70 to 90, 113 to 133, 136 to 156, 174 to 194, 202 to 222, 257 to 277, 299 to 319, 341 to 361, 368 to 388, 400 to 420, and 431 to 451; these read WLSL…VPVI, LNLS…GSIF, FLTA…SFIL, FFVG…SSMF, VGAG…AEFL, VSFV…LLYG, FVEI…ALLY, FGVN…SNIA, LWGL…LGRV, ILVM…VFGV, VAGI…FLLF, and ISLM…IYFP.

Belongs to the major facilitator superfamily. Nitrate/nitrite porter (TC 2.A.1.8) family. As to expression, expressed in seeds, leaves and shoots. Lower expression in roots.

It is found in the vacuole membrane. Its function is as follows. Involved in high-affinity nitrate transport. Controls nitrate content in seeds. The sequence is that of High affinity nitrate transporter 2.7 (NRT2.7) from Arabidopsis thaliana (Mouse-ear cress).